Reading from the N-terminus, the 182-residue chain is ATP-dependent protease subunit HslV (182 aa).

T12 is a catalytic residue. A167, C170, and T173 together coordinate Na(+).

The protein belongs to the peptidase T1B family. HslV subfamily. A double ring-shaped homohexamer of HslV is capped on each side by a ring-shaped HslU homohexamer. The assembly of the HslU/HslV complex is dependent on binding of ATP.

The protein resides in the cytoplasm. It catalyses the reaction ATP-dependent cleavage of peptide bonds with broad specificity.. Allosterically activated by HslU binding. Protease subunit of a proteasome-like degradation complex believed to be a general protein degrading machinery. The polypeptide is ATP-dependent protease subunit HslV (Paramagnetospirillum magneticum (strain ATCC 700264 / AMB-1) (Magnetospirillum magneticum)).